Reading from the N-terminus, the 92-residue chain is Small ribosomal subunit protein uS19 (92 aa).

This sequence belongs to the universal ribosomal protein uS19 family.

Its function is as follows. Protein S19 forms a complex with S13 that binds strongly to the 16S ribosomal RNA. In Leuconostoc mesenteroides subsp. mesenteroides (strain ATCC 8293 / DSM 20343 / BCRC 11652 / CCM 1803 / JCM 6124 / NCDO 523 / NBRC 100496 / NCIMB 8023 / NCTC 12954 / NRRL B-1118 / 37Y), this protein is Small ribosomal subunit protein uS19.